Reading from the N-terminus, the 167-residue chain is 2-C-methyl-D-erythritol 2,4-cyclodiphosphate synthase (167 aa).

2 residues coordinate a divalent metal cation: D10 and H12. 4-CDP-2-C-methyl-D-erythritol 2-phosphate-binding positions include 10-12 (DVH) and 36-37 (HS). H44 is a binding site for a divalent metal cation. 4-CDP-2-C-methyl-D-erythritol 2-phosphate is bound by residues 58 to 60 (NIG), 63 to 67 (FPNTN), 134 to 137 (TTSE), F141, and R144.

Belongs to the IspF family. In terms of assembly, homotrimer. It depends on a divalent metal cation as a cofactor.

The catalysed reaction is 4-CDP-2-C-methyl-D-erythritol 2-phosphate = 2-C-methyl-D-erythritol 2,4-cyclic diphosphate + CMP. It functions in the pathway isoprenoid biosynthesis; isopentenyl diphosphate biosynthesis via DXP pathway; isopentenyl diphosphate from 1-deoxy-D-xylulose 5-phosphate: step 4/6. Functionally, involved in the biosynthesis of isopentenyl diphosphate (IPP) and dimethylallyl diphosphate (DMAPP), two major building blocks of isoprenoid compounds. Catalyzes the conversion of 4-diphosphocytidyl-2-C-methyl-D-erythritol 2-phosphate (CDP-ME2P) to 2-C-methyl-D-erythritol 2,4-cyclodiphosphate (ME-CPP) with a corresponding release of cytidine 5-monophosphate (CMP). This chain is 2-C-methyl-D-erythritol 2,4-cyclodiphosphate synthase, found in Azobacteroides pseudotrichonymphae genomovar. CFP2.